A 513-amino-acid polypeptide reads, in one-letter code: Abl interactor 2 (513 aa).

Position 40 is a phosphoserine (serine 40). A t-SNARE coiled-coil homology domain is found at 45-107 (RALEETKAYT…DIHKEKVARR (63 aa)). The segment at 167–431 (KMGGLPRTTP…PPEDYEEEEA (265 aa)) is disordered. Residues 174 to 185 (TTPPTQKPPSPP) show a composition bias toward pro residues. Phosphoserine occurs at positions 183 and 227. The segment covering 217–241 (PTRNMAPSQQSPVRTASVNQRNRTY) has biased composition (polar residues). Low complexity predominate over residues 242–272 (SSSGSSGGSHPSSRSSSRENSGSGSVGVPIA). The segment covering 273–282 (VPTPSPPSVF) has biased composition (pro residues). Over residues 283–325 (PAPAGSAGTPPLPATSASAPAPLVPATVPSSTAPNAAAGGAPN) the composition is skewed to low complexity. The residue at position 361 (threonine 361) is a Phosphothreonine. Residue serine 368 is modified to Phosphoserine. The segment covering 376–399 (SITSQTSLQNQMNGGPFYSQNPVS) has biased composition (polar residues). A compositionally biased stretch (pro residues) spans 400–409 (DTPPPPPPVE). An SH3 domain is found at 451–510 (SYLEKVVAIYDYTKDKEDELSFQEGAIIYVIKKNDDGWYEGVMNGVTGLFPGNYVESIMH).

The protein belongs to the ABI family. Component of the WAVE complex composed of ABI2, CYFIP1 or CYFIP2, BRK1, NCKAP1 and WASF1/WAVE1. Within the complex, a heterodimer containing NCKAP1 and CYFIP1 interacts with a heterotrimer formed by WAVE1, ABI2 and BRK1. CYFIP2 binds to activated RAC1 which causes the complex to dissociate, releasing activated WASF1. Interacts (via SH3 domain) with ABL1 and ABL2. In terms of assembly, (Microbial infection) Interacts with human cytomegalovirus UL135. In terms of processing, phosphorylated by ABL1. Widely expressed. Abundant in testes, ovary, thymus, and colon, with lower but detectable levels in prostate, peripheral blood leukocytes, and spleen.

It localises to the cytoplasm. The protein resides in the nucleus. The protein localises to the cell projection. Its subcellular location is the lamellipodium. It is found in the filopodium. It localises to the cytoskeleton. The protein resides in the cell junction. The protein localises to the adherens junction. In terms of biological role, regulator of actin cytoskeleton dynamics underlying cell motility and adhesion. Functions as a component of the WAVE complex, which activates actin nucleating machinery Arp2/3 to drive lamellipodia formation. Acts as a regulator and substrate of nonreceptor tyrosine kinases ABL1 and ABL2 involved in processes linked to cell growth and differentiation. Positively regulates ABL1-mediated phosphorylation of ENAH, which is required for proper polymerization of nucleated actin filaments at the leading edge. Contributes to the regulation of actin assembly at the tips of neuron projections. In particular, controls dendritic spine morphogenesis and may promote dendritic spine specification toward large mushroom-type spines known as repositories of memory in the brain. In hippocampal neurons, may mediate actin-dependent BDNF-NTRK2 early endocytic trafficking that triggers dendrite outgrowth. Participates in ocular lens morphogenesis, likely by regulating lamellipodia-driven adherens junction formation at the epithelial cell-secondary lens fiber interface. Also required for nascent adherens junction assembly in epithelial cells. The chain is Abl interactor 2 from Homo sapiens (Human).